The primary structure comprises 115 residues: Somatostatin-1 (115 aa).

The signal sequence occupies residues 1–24; it reads MLSCRFQCALVLLSLAVVFSKVSA. The propeptide occupies 25 to 88; the sequence is APSDLRLRQL…QDEVRLELDR (64 aa). The interval 65–95 is disordered; the sequence is NDALDSSDLSRGADQDEVRLELDRSANSSPL. The span at 75–88 shows a compositional bias: basic and acidic residues; the sequence is RGADQDEVRLELDR. A disulfide bond links Cys-104 and Cys-115.

Belongs to the somatostatin family.

The protein localises to the secreted. Its function is as follows. Somatostatin inhibits the release of somatotropin. This chain is Somatostatin-1 (sst1), found in Protopterus annectens (African lungfish).